We begin with the raw amino-acid sequence, 296 residues long: Acetyl-coenzyme A carboxylase carboxyl transferase subunit beta (296 aa).

The CoA carboxyltransferase N-terminal domain maps to Leu25–Ala294.

This sequence belongs to the AccD/PCCB family. In terms of assembly, acetyl-CoA carboxylase is a heterohexamer composed of biotin carboxyl carrier protein (AccB), biotin carboxylase (AccC) and two subunits each of ACCase subunit alpha (AccA) and ACCase subunit beta (AccD).

It localises to the cytoplasm. The enzyme catalyses N(6)-carboxybiotinyl-L-lysyl-[protein] + acetyl-CoA = N(6)-biotinyl-L-lysyl-[protein] + malonyl-CoA. It participates in lipid metabolism; malonyl-CoA biosynthesis; malonyl-CoA from acetyl-CoA: step 1/1. Functionally, component of the acetyl coenzyme A carboxylase (ACC) complex. Biotin carboxylase (BC) catalyzes the carboxylation of biotin on its carrier protein (BCCP) and then the CO(2) group is transferred by the transcarboxylase to acetyl-CoA to form malonyl-CoA. The chain is Acetyl-coenzyme A carboxylase carboxyl transferase subunit beta from Brucella ovis (strain ATCC 25840 / 63/290 / NCTC 10512).